The primary structure comprises 104 residues: Large ribosomal subunit protein bL21 (104 aa).

This sequence belongs to the bacterial ribosomal protein bL21 family. Part of the 50S ribosomal subunit. Contacts protein L20.

Its function is as follows. This protein binds to 23S rRNA in the presence of protein L20. This Streptococcus uberis (strain ATCC BAA-854 / 0140J) protein is Large ribosomal subunit protein bL21.